A 145-amino-acid chain; its full sequence is U1 small nuclear ribonucleoprotein C (145 aa).

A Matrin-type zinc finger spans residues 4 to 36 (YYCDYCDTYLTHDSPSVRKTHCTGRKHRDNVKF). The disordered stretch occupies residues 67–91 (FAGGPGGAPPKPAGVSIPPPNMGAP). The span at 73 to 91 (GAPPKPAGVSIPPPNMGAP) shows a compositional bias: pro residues.

The protein belongs to the U1 small nuclear ribonucleoprotein C family. U1 snRNP is composed of the 7 core Sm proteins B/B', D1, D2, D3, E, F and G that assemble in a heptameric protein ring on the Sm site of the small nuclear RNA to form the core snRNP, and at least 3 U1 snRNP-specific proteins U1-70K, U1-A and U1-C. U1-C interacts with U1 snRNA and the 5' splice-site region of the pre-mRNA.

It is found in the nucleus. In terms of biological role, component of the spliceosomal U1 snRNP, which is essential for recognition of the pre-mRNA 5' splice-site and the subsequent assembly of the spliceosome. U1-C is directly involved in initial 5' splice-site recognition for both constitutive and regulated alternative splicing. The interaction with the 5' splice-site seems to precede base-pairing between the pre-mRNA and the U1 snRNA. Stimulates commitment or early (E) complex formation by stabilizing the base pairing of the 5' end of the U1 snRNA and the 5' splice-site region. Regulates alternative splicing of a distinct group of target genes. The protein is U1 small nuclear ribonucleoprotein C of Drosophila melanogaster (Fruit fly).